Here is a 137-residue protein sequence, read N- to C-terminus: Large ribosomal subunit protein uL16 (137 aa).

It belongs to the universal ribosomal protein uL16 family. Part of the 50S ribosomal subunit.

In terms of biological role, binds 23S rRNA and is also seen to make contacts with the A and possibly P site tRNAs. This chain is Large ribosomal subunit protein uL16, found in Rhodopseudomonas palustris (strain BisB18).